Here is a 193-residue protein sequence, read N- to C-terminus: Coiled-coil domain-containing protein 184 (193 aa).

Residues 39-68 are a coiled coil; sequence GMKELMEHLKAQLQALFEDVRAMRGALDEQ. The tract at residues 101–176 is disordered; it reads GLGVAGGKGS…LGENGPLVEP (76 aa). The span at 135 to 146 shows a compositional bias: acidic residues; it reads PDEEDEEEEEEK.

This is Coiled-coil domain-containing protein 184 (Ccdc184) from Rattus norvegicus (Rat).